The following is a 341-amino-acid chain: Ribosomal RNA small subunit methyltransferase H (341 aa).

S-adenosyl-L-methionine is bound by residues 47–49 (GGY), D64, F97, D109, and Q116.

The protein belongs to the methyltransferase superfamily. RsmH family.

It localises to the cytoplasm. The catalysed reaction is cytidine(1402) in 16S rRNA + S-adenosyl-L-methionine = N(4)-methylcytidine(1402) in 16S rRNA + S-adenosyl-L-homocysteine + H(+). Its function is as follows. Specifically methylates the N4 position of cytidine in position 1402 (C1402) of 16S rRNA. The sequence is that of Ribosomal RNA small subunit methyltransferase H from Allorhizobium ampelinum (strain ATCC BAA-846 / DSM 112012 / S4) (Agrobacterium vitis (strain S4)).